A 146-amino-acid chain; its full sequence is uncharacterized protein (146 aa).

The tract at residues 67–93 (DDNGMESGFCSGATSTGQSASTSPAPV) is disordered. The span at 77–92 (SGATSTGQSASTSPAP) shows a compositional bias: low complexity.

This is an uncharacterized protein from Caenorhabditis elegans.